The primary structure comprises 288 residues: Nucleotide-binding protein Pcar_1935 (288 aa).

11–18 (GLSGSGKT) serves as a coordination point for ATP. GTP is bound at residue 62 to 65 (DVRN).

Belongs to the RapZ-like family.

Functionally, displays ATPase and GTPase activities. The chain is Nucleotide-binding protein Pcar_1935 from Syntrophotalea carbinolica (strain DSM 2380 / NBRC 103641 / GraBd1) (Pelobacter carbinolicus).